Consider the following 427-residue polypeptide: MTEAMKITLSTQPADARWGEKATYSINNDGITLHLNGADDLGLIQRAARKIDGLGIKHVQLSGEGWDADRCWAFWQGYKAPKGTRKVEWPDLDDAQRQELDNRLMIIDWVRDTINAPAEELGPSQLAQRAVDLISNVAGDRVTYRITKGEDLREQGYMGLHTVGRGSERSPVLLALDYNPTGDKEAPVYACLVGKGITFDSGGYSIKQTAFMDSMKSDMGGAATVTGALAFAITRGLNKRVKLFLCCADNLISGNAFKLGDIITYRNGKKVEVMNTDAEGRLVLADGLIDASAQKPEMIIDAATLTGAAKTALGNDYHALFSFDDALAGRLLASASQENEPFWRLPLAEFHRSQLPSNFAELNNTGSAAYPAGASTAAGFLSHFVENYQQGWLHIDCSATYRKAPVEQWSAGATGLGVRTIANLLTA.

Mn(2+) contacts are provided by lysine 195 and aspartate 200. Lysine 207 is an active-site residue. The Mn(2+) site is built by aspartate 218, aspartate 277, and glutamate 279. The active site involves arginine 281.

Belongs to the peptidase M17 family. As to quaternary structure, homohexamer. The cofactor is Mn(2+).

The protein localises to the cytoplasm. It carries out the reaction Release of an N-terminal amino acid, Xaa, from a peptide or arylamide. Xaa is preferably Glu or Asp but may be other amino acids, including Leu, Met, His, Cys and Gln.. Its function is as follows. Probably plays an important role in intracellular peptide degradation. The chain is Peptidase B from Escherichia coli (strain SE11).